We begin with the raw amino-acid sequence, 749 residues long: Small G protein signaling modulator 3 (749 aa).

In terms of domain architecture, Rab-GAP TBC spans 114 to 305 (GIPHGMRPQL…RIWDLFFYEG (192 aa)). The residue at position 406 (S406) is a Phosphoserine. The stretch at 415-439 (EDDLEALKAKNIKQTELVADLREAI) forms a coiled coil. The SH3 domain occupies 480-539 (SHRRRAKALLDFERHDDDELGFRKNDIITIVSQKDEHCWVGELNGLRGWFPAKFVEVLDE). Residues 555–718 (GVTDLVRGTL…FAFSLSQDWE (164 aa)) form the RUN domain.

This sequence belongs to the small G protein signaling modulator family. In terms of assembly, interacts with GJA1. Interaction with GJA1 induces its degradation. Interacts via its RUN domain with the C-terminal region of NF2. Interacts with RAB3A, RAB4A, RAB5A, RAB8A, RAB11A, RAP1A, RAP1B, RAP2A, RAP2B and PDCD6IP. No interaction with RAB27A. In terms of tissue distribution, widely expressed.

The protein resides in the cytoplasm. May play a cooperative role in NF2-mediated growth suppression of cells. This Homo sapiens (Human) protein is Small G protein signaling modulator 3.